Consider the following 210-residue polypeptide: Cell division protein SepF (210 aa).

The tract at residues 13–78 (GFGEPTGYDY…VTSTAMNPPM (66 aa)) is disordered. The segment covering 22-31 (YDYDEMEGDD) has biased composition (acidic residues). Basic and acidic residues predominate over residues 47 to 60 (RSEEPHPRPSEPEM). The span at 64 to 78 (VNTSAVTSTAMNPPM) shows a compositional bias: polar residues.

The protein belongs to the SepF family. As to quaternary structure, homodimer. Interacts with FtsZ.

The protein localises to the cytoplasm. Cell division protein that is part of the divisome complex and is recruited early to the Z-ring. Probably stimulates Z-ring formation, perhaps through the cross-linking of FtsZ protofilaments. Its function overlaps with FtsA. In Cyanothece sp. (strain PCC 7425 / ATCC 29141), this protein is Cell division protein SepF.